The primary structure comprises 517 residues: Endoglucanase A (517 aa).

Residues 1–25 form the signal peptide; it reads MKRSLLKTCSIIAGATIIFSSLSIS. The active-site Proton donor is Glu185. The active-site Nucleophile is Glu309. Basic and acidic residues predominate over residues 382–392; that stretch reads HPEATEDDKPS. A disordered region spans residues 382-424; that stretch reads HPEATEDDKPSTDVTNPDSGNTKPDSGNTNPGTETTTPTDNEK. Polar residues predominate over residues 393–407; the sequence is TDVTNPDSGNTKPDS. Over residues 408-420 the composition is skewed to low complexity; that stretch reads GNTNPGTETTTPT. In terms of domain architecture, CBM2 spans 416 to 517; the sequence is TTTPTDNEKI…VISNFEYKFD (102 aa).

Belongs to the glycosyl hydrolase 5 (cellulase A) family.

It carries out the reaction Endohydrolysis of (1-&gt;4)-beta-D-glucosidic linkages in cellulose, lichenin and cereal beta-D-glucans.. Functionally, hydrolyzes barley beta-glucan, lichenan, carboxymethylcellulose and xylan. It shows preferential activity against the larger cellooligosaccharides (cellohexaose and cellopentaose); cellotetraose is the smallest substrate degraded completely. The polypeptide is Endoglucanase A (celA) (Clostridium longisporum).